An 895-amino-acid chain; its full sequence is Stonin-2 (895 aa).

Disordered regions lie at residues 15 to 119 (WVSF…PPHK), 145 to 222 (SESS…APPV), and 234 to 280 (EDNE…KSTL). Residues 64–73 (SHSEQDDSSE) are compositionally biased toward basic and acidic residues. The span at 145 to 193 (SESSWTTHSEDTSSPSVAPSYTDLQLINTEEQASGRASGTDSTDNSSSL) shows a compositional bias: polar residues. Residues 241–251 (PSPPVPSPKKP) are compositionally biased toward pro residues. Thr253 carries the post-translational modification Phosphothreonine. Phosphoserine occurs at positions 278 and 299. 2 consecutive short sequence motifs (NPF) follow at residues 310-312 (NPF) and 326-328 (NPF). Positions 386–421 (QIDDPDPVGNTALPDDDPTASVELDAPSPASALSQP) are disordered. The 134-residue stretch at 424–557 (GWPMMLRIPE…DLPVLSMDLS (134 aa)) folds into the SHD domain. Residues 565-872 (EEEITVDVRD…AHYSYKVEIE (308 aa)) enclose the MHD domain. Ser759 is subject to Phosphoserine.

The protein belongs to the Stoned B family. In terms of assembly, interacts with the second C2 domain of synaptotagmins SYT1 and SYT2. Interacts with EPS15, EPS15R and ITSN1. Interacts indirectly with the AP-2 adapter complex. Interacts with TOR1A and COPS4; the interaction controls STON2 protein stability. Post-translationally, phosphorylated in vitro by PKD. Neddylated; deneddylated via its interaction with the COP9 signalosome (CSN) complex through TOR1A and COPS4. In terms of processing, ubiquitinated; leading to its degradation.

It localises to the cytoplasm. It is found in the membrane. The protein resides in the synapse. The protein localises to the synaptosome. In terms of biological role, adapter protein involved in endocytic machinery. Involved in the synaptic vesicle recycling. May facilitate clathrin-coated vesicle uncoating. The chain is Stonin-2 (Ston2) from Mus musculus (Mouse).